We begin with the raw amino-acid sequence, 342 residues long: Holliday junction branch migration complex subunit RuvB (342 aa).

Residues 1-179 form a large ATPase domain (RuvB-L) region; it reads MTNILSPEKS…FGIPMRLNFY (179 aa). Residues I18, R19, G60, K63, T64, T65, 126–128, R169, Y179, and R216 each bind ATP; that span reads EDF. Residue T64 coordinates Mg(2+). The interval 180–250 is small ATPAse domain (RuvB-S); the sequence is NTEELKKVLN…VSDFGLNRLE (71 aa). The tract at residues 253–342 is head domain (RuvB-H); sequence RIGLDSNDYR…HQFNIFNENE (90 aa). DNA-binding residues include R289, R308, and R313.

The protein belongs to the RuvB family. In terms of assembly, homohexamer. Forms an RuvA(8)-RuvB(12)-Holliday junction (HJ) complex. HJ DNA is sandwiched between 2 RuvA tetramers; dsDNA enters through RuvA and exits via RuvB. An RuvB hexamer assembles on each DNA strand where it exits the tetramer. Each RuvB hexamer is contacted by two RuvA subunits (via domain III) on 2 adjacent RuvB subunits; this complex drives branch migration. In the full resolvosome a probable DNA-RuvA(4)-RuvB(12)-RuvC(2) complex forms which resolves the HJ.

The protein resides in the cytoplasm. The enzyme catalyses ATP + H2O = ADP + phosphate + H(+). Functionally, the RuvA-RuvB-RuvC complex processes Holliday junction (HJ) DNA during genetic recombination and DNA repair, while the RuvA-RuvB complex plays an important role in the rescue of blocked DNA replication forks via replication fork reversal (RFR). RuvA specifically binds to HJ cruciform DNA, conferring on it an open structure. The RuvB hexamer acts as an ATP-dependent pump, pulling dsDNA into and through the RuvAB complex. RuvB forms 2 homohexamers on either side of HJ DNA bound by 1 or 2 RuvA tetramers; 4 subunits per hexamer contact DNA at a time. Coordinated motions by a converter formed by DNA-disengaged RuvB subunits stimulates ATP hydrolysis and nucleotide exchange. Immobilization of the converter enables RuvB to convert the ATP-contained energy into a lever motion, pulling 2 nucleotides of DNA out of the RuvA tetramer per ATP hydrolyzed, thus driving DNA branch migration. The RuvB motors rotate together with the DNA substrate, which together with the progressing nucleotide cycle form the mechanistic basis for DNA recombination by continuous HJ branch migration. Branch migration allows RuvC to scan DNA until it finds its consensus sequence, where it cleaves and resolves cruciform DNA. This Rickettsia rickettsii (strain Sheila Smith) protein is Holliday junction branch migration complex subunit RuvB.